Reading from the N-terminus, the 365-residue chain is Alpha-keto acid-binding periplasmic protein TakP (365 aa).

The segment at residues 1-26 (MDRRSFITKAAVGGAAASALAAPALA) is a signal peptide (tat-type signal). Substrate is bound by residues 99 to 100 (YY), Gln156, and Arg177. Position 156 (Gln156) interacts with Na(+). 3 residues coordinate Na(+): Glu214, Trp215, and Glu240.

Belongs to the bacterial solute-binding protein 7 family. As to quaternary structure, homodimer. The complex comprises the extracytoplasmic solute receptor protein TakP, and the two transmembrane proteins TakQ and TakM. Predicted to be exported by the Tat system. The position of the signal peptide cleavage has not been experimentally proven.

The protein resides in the periplasm. Part of the tripartite ATP-independent periplasmic (TRAP) transport system TakPQM involved in the uptake of alpha-keto acids. This protein specifically binds alpha-keto acids including pyruvate, oxobutyrate, oxovalerate and 4-methyl-2-oxovalerate. Ligand-binding affinity increases with the increasing chain length of the aliphatic backbone of the ligand. Is not able to bind alpha-ketoglutarate. This chain is Alpha-keto acid-binding periplasmic protein TakP, found in Cereibacter sphaeroides (strain ATCC 17023 / DSM 158 / JCM 6121 / CCUG 31486 / LMG 2827 / NBRC 12203 / NCIMB 8253 / ATH 2.4.1.) (Rhodobacter sphaeroides).